We begin with the raw amino-acid sequence, 385 residues long: Major capsid protein (385 aa).

The stretch at 1–57 (MSELALIQKAIEESQQKMTQLFDAQKAEIESTGQVSKQLQSDLMKVQEELTKSGTRL) forms a coiled coil. Lys169 participates in a covalent cross-link: Isoaspartyl lysine isopeptide (Lys-Asn) (interchain with N-356). Residue Asn356 forms an Isoaspartyl lysine isopeptide (Asn-Lys) (interchain with K-169) linkage.

The protein belongs to the HK97 phage major capsid protein family. Homopentamer and homohexamer; isoaspartyl lysine isopeptide-linked. Interacts with the portal protein. In terms of processing, the scaffolding domain delta is cleaved by the viral protease and lost after assembly. Post-translationally, the major capsid proteins are covalently cross-linked.

The protein localises to the virion. Functionally, assembles to form an icosahedral capsid of 66 nm, with a T=7 laevo symmetry. Responsible for its self-assembly into a procapsid. The phage does not need to encode a separate scaffolfing protein because its capsid protein contains the delta domain that carries that function. In Escherichia coli (Bacteriophage HK97), this protein is Major capsid protein (5).